The primary structure comprises 765 residues: Membrane metallo-endopeptidase-like 1 (765 aa).

The Cytoplasmic portion of the chain corresponds to 1 to 19 (MVERAGWCRKKSPGFVEYG). Residues 20-40 (LMVLLLLLLGAIVTLGVFYSI) form a helical; Signal-anchor for type II membrane protein membrane-spanning segment. Over 41–765 (GKQLPLLTSL…MHPMKRCRIW (725 aa)) the chain is Lumenal. Positions 74 to 765 (ICTTPSCVIA…MHPMKRCRIW (692 aa)) constitute a Peptidase M13 domain. Cystine bridges form between cysteine 75–cysteine 80, cysteine 98–cysteine 750, cysteine 106–cysteine 710, cysteine 161–cysteine 425, and cysteine 636–cysteine 762. Residue arginine 121 participates in a peptide binding. Residues asparagine 163, asparagine 279, asparagine 303, and asparagine 336 are each glycosylated (N-linked (GlcNAc...) asparagine). A coiled-coil region spans residues 523–549 (FENGLQNLKNNAQRSLKKLREKVDQNL). Histidine 599 serves as a coordination point for Zn(2+). Residue glutamate 600 is part of the active site. Zn(2+) is bound by residues histidine 603 and glutamate 662. Residue aspartate 666 is the Proton donor of the active site. An N-linked (GlcNAc...) asparagine glycan is attached at asparagine 694.

The protein belongs to the peptidase M13 family. Requires Zn(2+) as cofactor. N-glycosylated. As to expression, highly expressed in testis. Also expressed in ovary. Weakly or not expressed in brain, lung, heart, liver, kidney, adrenal gland and intestine.

It localises to the membrane. Its subcellular location is the secreted. It carries out the reaction Preferential cleavage of polypeptides between hydrophobic residues, particularly with Phe or Tyr at P1'.. Inhibited by thiorphan and phosphoramidon. Metalloprotease involved in sperm function, possibly by modulating the processes of fertilization and early embryonic development. Degrades a broad variety of small peptides with a preference for peptides shorter than 3 kDa containing neutral bulky aliphatic or aromatic amino acid residues. Shares the same substrate specificity with MME and cleaves peptides at the same amide bond. The sequence is that of Membrane metallo-endopeptidase-like 1 (Mmel1) from Mus musculus (Mouse).